Here is a 403-residue protein sequence, read N- to C-terminus: Na(+)-translocating NADH-quinone reductase subunit B (403 aa).

9 consecutive transmembrane segments (helical) span residues 56–76 (MMII…YNVG), 121–141 (AYFL…EVLF), 164–184 (LPPS…VVLG), 225–245 (GFAG…NILG), 260–280 (GSMG…LLLT), 287–307 (IVAG…AIGS), 312–332 (MFAM…GMIF), 348–368 (WLFG…NPAF), and 371–391 (GMML…HFVV). T230 bears the FMN phosphoryl threonine mark.

The protein belongs to the NqrB/RnfD family. As to quaternary structure, composed of six subunits; NqrA, NqrB, NqrC, NqrD, NqrE and NqrF. It depends on FMN as a cofactor.

The protein resides in the cell inner membrane. It carries out the reaction a ubiquinone + n Na(+)(in) + NADH + H(+) = a ubiquinol + n Na(+)(out) + NAD(+). NQR complex catalyzes the reduction of ubiquinone-1 to ubiquinol by two successive reactions, coupled with the transport of Na(+) ions from the cytoplasm to the periplasm. NqrA to NqrE are probably involved in the second step, the conversion of ubisemiquinone to ubiquinol. This is Na(+)-translocating NADH-quinone reductase subunit B from Pseudomonas aeruginosa (strain LESB58).